We begin with the raw amino-acid sequence, 331 residues long: Protein RecA (331 aa).

61-68 (GPESSGKT) serves as a coordination point for ATP.

The protein belongs to the RecA family.

It is found in the cytoplasm. Functionally, can catalyze the hydrolysis of ATP in the presence of single-stranded DNA, the ATP-dependent uptake of single-stranded DNA by duplex DNA, and the ATP-dependent hybridization of homologous single-stranded DNAs. It interacts with LexA causing its activation and leading to its autocatalytic cleavage. The sequence is that of Protein RecA from Mycoplasma mobile (strain ATCC 43663 / 163K / NCTC 11711) (Mesomycoplasma mobile).